A 60-amino-acid polypeptide reads, in one-letter code: Large ribosomal subunit protein bL32 (60 aa).

A compositionally biased stretch (basic residues) spans 1–16; it reads MAVPRRKTSPSRRGMR. The segment at 1 to 60 is disordered; it reads MAVPRRKTSPSRRGMRRSADAIKKPTYVEDKDSGELRRPHHLDLKTGMYKGRQVLKKKDA. Residues 17 to 44 show a composition bias toward basic and acidic residues; that stretch reads RSADAIKKPTYVEDKDSGELRRPHHLDL.

It belongs to the bacterial ribosomal protein bL32 family.

In Bradyrhizobium sp. (strain BTAi1 / ATCC BAA-1182), this protein is Large ribosomal subunit protein bL32.